Consider the following 793-residue polypeptide: DnaJ homolog subfamily C member 10 (793 aa).

An N-terminal signal peptide occupies residues 1–32; it reads MGVWLSKDDYIRDLKRIILCFLIVYMAILVGT. A J domain is found at 35–100; the sequence is DFYSLLGVSK…DLRKKYDKYG (66 aa). The Thioredoxin 1 domain maps to 130 to 232; the sequence is EIITLERREF…ESLVSFAMQH (103 aa). Residues C158 and C161 are joined by a disulfide bond. 2 trxb regions span residues 235 to 350 and 348 to 463; these read STVT…LPDF and PDFE…PQNF. 3 consecutive Thioredoxin domains span residues 454–553, 557–662, and 671–778; these read HVTT…IEDL, SVVS…SLRI, and VSTG…INEK. C480 and C483 are disulfide-bonded. The N-linked (GlcNAc...) asparagine glycan is linked to N530. 2 disulfides stabilise this stretch: C588–C591 and C700–C703. The Prevents secretion from ER signature appears at 790-793; sequence KDEL.

As to quaternary structure, interacts with HSPA5 (via its J domain). Interacts with EDEM1.

Its subcellular location is the endoplasmic reticulum lumen. In terms of biological role, endoplasmic reticulum disulfide reductase involved both in the correct folding of proteins and degradation of misfolded proteins. Required for efficient folding of proteins in the endoplasmic reticulum by catalyzing the removal of non-native disulfide bonds formed during the folding of proteins, such as LDLR. Also involved in endoplasmic reticulum-associated degradation (ERAD) by reducing incorrect disulfide bonds in misfolded glycoproteins recognized by EDEM1. Interaction with HSPA5 is required its activity, not for the disulfide reductase activity, but to facilitate the release of DNAJC10 from its substrate. Promotes apoptotic signaling pathway in response to endoplasmic reticulum stress. The protein is DnaJ homolog subfamily C member 10 (DNAJC10) of Pongo abelii (Sumatran orangutan).